Consider the following 360-residue polypeptide: 4-hydroxy-3-methylbut-2-en-1-yl diphosphate synthase (flavodoxin) (360 aa).

The [4Fe-4S] cluster site is built by C265, C268, C300, and E307.

It belongs to the IspG family. [4Fe-4S] cluster is required as a cofactor.

It catalyses the reaction (2E)-4-hydroxy-3-methylbut-2-enyl diphosphate + oxidized [flavodoxin] + H2O + 2 H(+) = 2-C-methyl-D-erythritol 2,4-cyclic diphosphate + reduced [flavodoxin]. It participates in isoprenoid biosynthesis; isopentenyl diphosphate biosynthesis via DXP pathway; isopentenyl diphosphate from 1-deoxy-D-xylulose 5-phosphate: step 5/6. Its function is as follows. Converts 2C-methyl-D-erythritol 2,4-cyclodiphosphate (ME-2,4cPP) into 1-hydroxy-2-methyl-2-(E)-butenyl 4-diphosphate. The sequence is that of 4-hydroxy-3-methylbut-2-en-1-yl diphosphate synthase (flavodoxin) from Brevibacillus brevis (strain 47 / JCM 6285 / NBRC 100599).